We begin with the raw amino-acid sequence, 431 residues long: Ribosomal RNA small subunit methyltransferase B (431 aa).

S-adenosyl-L-methionine contacts are provided by residues 254–260 (CAAPGGK), Asp277, Asp303, and Asp322. Cys375 (nucleophile) is an active-site residue.

This sequence belongs to the class I-like SAM-binding methyltransferase superfamily. RsmB/NOP family.

It is found in the cytoplasm. The catalysed reaction is cytidine(967) in 16S rRNA + S-adenosyl-L-methionine = 5-methylcytidine(967) in 16S rRNA + S-adenosyl-L-homocysteine + H(+). Specifically methylates the cytosine at position 967 (m5C967) of 16S rRNA. The sequence is that of Ribosomal RNA small subunit methyltransferase B from Klebsiella pneumoniae subsp. pneumoniae (strain ATCC 700721 / MGH 78578).